A 468-amino-acid chain; its full sequence is 3-isopropylmalate dehydratase large subunit (468 aa).

3 residues coordinate [4Fe-4S] cluster: cysteine 345, cysteine 405, and cysteine 408.

The protein belongs to the aconitase/IPM isomerase family. LeuC type 1 subfamily. Heterodimer of LeuC and LeuD. It depends on [4Fe-4S] cluster as a cofactor.

It catalyses the reaction (2R,3S)-3-isopropylmalate = (2S)-2-isopropylmalate. Its pathway is amino-acid biosynthesis; L-leucine biosynthesis; L-leucine from 3-methyl-2-oxobutanoate: step 2/4. Its function is as follows. Catalyzes the isomerization between 2-isopropylmalate and 3-isopropylmalate, via the formation of 2-isopropylmaleate. The chain is 3-isopropylmalate dehydratase large subunit from Oceanobacillus iheyensis (strain DSM 14371 / CIP 107618 / JCM 11309 / KCTC 3954 / HTE831).